We begin with the raw amino-acid sequence, 412 residues long: MSYITKQDKVIAEAIEREFQRQNSNIELIASENFVSEAVMEAQGSVLTNKYAEGYPGRRYYGGCEFVDVTESIAIDRAKALFGAEHVNVQPHSGSQANMAVYLVALEMGDTVLGMNLRHGGHLTHGAPVNFSGKFYNFVEYGVDKDTERINYDEVRKLALEHKPKLIVAGASAYSRTIDFKKFKEIADEVNAKLMVDMAHIAGLVAAGLHPNPVEYADFVTTTTHKTLRGPRGGMILCKEEYKKDIDKTIFPGIQGGPLEHVIAAKAVAFGEALENNFKTYQQQVVKNAKVLAEALINEGFRIVSGGTDNHLVAVDVKGSIGLTGKEAEETLDSVGITCNKNTIPFDQEKPFVTSGIRLGTPAATTRGFDEKAFEEVAKIISLALKNSKDEEKLQQAKERVAKLTAEYPLYQ.

(6S)-5,6,7,8-tetrahydrofolate-binding positions include Leu117 and 121–123 (GHL). Lys226 is modified (N6-(pyridoxal phosphate)lysine).

The protein belongs to the SHMT family. In terms of assembly, homodimer. The cofactor is pyridoxal 5'-phosphate.

It localises to the cytoplasm. It catalyses the reaction (6R)-5,10-methylene-5,6,7,8-tetrahydrofolate + glycine + H2O = (6S)-5,6,7,8-tetrahydrofolate + L-serine. It functions in the pathway one-carbon metabolism; tetrahydrofolate interconversion. The protein operates within amino-acid biosynthesis; glycine biosynthesis; glycine from L-serine: step 1/1. Its function is as follows. Catalyzes the reversible interconversion of serine and glycine with tetrahydrofolate (THF) serving as the one-carbon carrier. This reaction serves as the major source of one-carbon groups required for the biosynthesis of purines, thymidylate, methionine, and other important biomolecules. Also exhibits THF-independent aldolase activity toward beta-hydroxyamino acids, producing glycine and aldehydes, via a retro-aldol mechanism. This is Serine hydroxymethyltransferase from Staphylococcus aureus (strain bovine RF122 / ET3-1).